We begin with the raw amino-acid sequence, 210 residues long: ATP-dependent Clp protease proteolytic subunit (210 aa).

Catalysis depends on S106, which acts as the Nucleophile. H131 is an active-site residue.

This sequence belongs to the peptidase S14 family. In terms of assembly, fourteen ClpP subunits assemble into 2 heptameric rings which stack back to back to give a disk-like structure with a central cavity, resembling the structure of eukaryotic proteasomes.

It is found in the cytoplasm. It catalyses the reaction Hydrolysis of proteins to small peptides in the presence of ATP and magnesium. alpha-casein is the usual test substrate. In the absence of ATP, only oligopeptides shorter than five residues are hydrolyzed (such as succinyl-Leu-Tyr-|-NHMec, and Leu-Tyr-Leu-|-Tyr-Trp, in which cleavage of the -Tyr-|-Leu- and -Tyr-|-Trp bonds also occurs).. Its function is as follows. Cleaves peptides in various proteins in a process that requires ATP hydrolysis. Has a chymotrypsin-like activity. Plays a major role in the degradation of misfolded proteins. The sequence is that of ATP-dependent Clp protease proteolytic subunit from Bartonella quintana (strain Toulouse) (Rochalimaea quintana).